We begin with the raw amino-acid sequence, 87 residues long: Protein moa-2 (87 aa).

The disordered stretch occupies residues 23–87; sequence GTAMRHEPSR…VWTASREESS (65 aa). 2 stretches are compositionally biased toward basic and acidic residues: residues 26–39 and 50–63; these read MRHE…ESAP and RNEH…EREP.

This chain is Protein moa-2, found in Caenorhabditis elegans.